The following is a 205-amino-acid chain: Outer-membrane lipoprotein LolB (205 aa).

The signal sequence occupies residues 1–17 (MFLRHCITFTLIALLAG). Cys-18 carries the N-palmitoyl cysteine lipid modification. Residue Cys-18 is the site of S-diacylglycerol cysteine attachment.

It belongs to the LolB family. Monomer.

It is found in the cell outer membrane. Its function is as follows. Plays a critical role in the incorporation of lipoproteins in the outer membrane after they are released by the LolA protein. The sequence is that of Outer-membrane lipoprotein LolB from Pseudomonas putida (strain GB-1).